We begin with the raw amino-acid sequence, 158 residues long: Snaclec mucetin subunit alpha (158 aa).

Residues 1–23 form the signal peptide; that stretch reads MGRFTFVSFGLLVVFLSLSGTGA. Disulfide bonds link C27–C38, C55–C152, and C127–C144. In terms of domain architecture, C-type lectin spans 34 to 153; it reads YDRYCYQAFS…CGRENPFVCK (120 aa).

The protein belongs to the snaclec family. In terms of assembly, dimer and tetramer of heterodimers of alpha and beta subunits ((alphabeta)(2) and (alphabeta)(4)); disulfide-linked. These two multimeric forms are found. The complex is glycosylated. Expressed by the venom gland.

It localises to the secreted. Potent platelet activator that acts via GPIb (GP1BA/GP1BB). After activation by the toxin, the receptor is redistributed on platelet surface thanks to cytoskeletal translocation. The indirect activation of integrin alpha-IIb/beta-3 (ITGA2B/ITGB3) also induced by the toxin is downstream the cytoskeletal translocation of GPIb. In Protobothrops mucrosquamatus (Taiwan habu), this protein is Snaclec mucetin subunit alpha.